The chain runs to 429 residues: 3-phosphoshikimate 1-carboxyvinyltransferase (429 aa).

K22, S23, and R27 together coordinate 3-phosphoshikimate. K22 contributes to the phosphoenolpyruvate binding site. Phosphoenolpyruvate is bound by residues G94 and R122. Residues S167, Q169, D315, and K342 each coordinate 3-phosphoshikimate. Q169 serves as a coordination point for phosphoenolpyruvate. D315 serves as the catalytic Proton acceptor. The phosphoenolpyruvate site is built by R346 and R388.

Belongs to the EPSP synthase family. Monomer.

Its subcellular location is the cytoplasm. It catalyses the reaction 3-phosphoshikimate + phosphoenolpyruvate = 5-O-(1-carboxyvinyl)-3-phosphoshikimate + phosphate. The protein operates within metabolic intermediate biosynthesis; chorismate biosynthesis; chorismate from D-erythrose 4-phosphate and phosphoenolpyruvate: step 6/7. In terms of biological role, catalyzes the transfer of the enolpyruvyl moiety of phosphoenolpyruvate (PEP) to the 5-hydroxyl of shikimate-3-phosphate (S3P) to produce enolpyruvyl shikimate-3-phosphate and inorganic phosphate. The protein is 3-phosphoshikimate 1-carboxyvinyltransferase of Citrifermentans bemidjiense (strain ATCC BAA-1014 / DSM 16622 / JCM 12645 / Bem) (Geobacter bemidjiensis).